A 136-amino-acid polypeptide reads, in one-letter code: General odorant-binding protein 57d (136 aa).

The first 29 residues, 1 to 29, serve as a signal peptide directing secretion; that stretch reads MPEKMSLRLVPHLACIIFILEIQFRIADS. Disulfide bonds link C33–C70, C66–C118, and C107–C127.

Belongs to the PBP/GOBP family.

Present in the aqueous fluid surrounding olfactory sensory dendrites and are thought to aid in the capture and transport of hydrophobic odorants into and through this fluid. The sequence is that of General odorant-binding protein 57d from Drosophila melanogaster (Fruit fly).